The chain runs to 204 residues: UPF0215 protein MTH_1316 (204 aa).

Belongs to the UPF0215 family.

This chain is UPF0215 protein MTH_1316, found in Methanothermobacter thermautotrophicus (strain ATCC 29096 / DSM 1053 / JCM 10044 / NBRC 100330 / Delta H) (Methanobacterium thermoautotrophicum).